The sequence spans 534 residues: Inorganic phosphate transporter 1-6 (534 aa).

The Cytoplasmic segment spans residues 1–29 (MGGGGGEQQQLEVLHALDVAKTQWYHFTA). Residues 30 to 50 (IVVAGMGFFTDAYDLFCISLV) form a helical membrane-spanning segment. Over 51-75 (TKLLGRIYYRVDGSPSPGTLPPHVS) the chain is Extracellular. The helical transmembrane segment at 76 to 96 (ASVNGVAFVGTLSGQLFFGWL) threads the bilayer. Residues 97 to 104 (GDKLGRKR) are Cytoplasmic-facing. The helical transmembrane segment at 105–125 (VYGITLMLMVLCSLASALSFG) threads the bilayer. Topologically, residues 126–127 (HT) are extracellular. A helical transmembrane segment spans residues 128 to 148 (PTSVMATLCFFRFWLGFGIGG). Residues 149 to 168 (DYPLSATIMSEYANKKTRGA) lie on the Cytoplasmic side of the membrane. A helical membrane pass occupies residues 169–189 (FIAAVFAMQGFGIITGGLVAI). Topologically, residues 190 to 216 (LVSASFRAAFPAPPYGEDPVASTPPQA) are extracellular. The helical transmembrane segment at 217–237 (DFVWRIILMLGALPAALTYYW) threads the bilayer. Residues 238 to 294 (RTKMPETARYTALVANNAKQAAADMSKVLQVVEMRNIGNNGGSRRPFGLFSGEFVRR) lie on the Cytoplasmic side of the membrane. A helical membrane pass occupies residues 295-315 (HGLHLVGTSATWLLLDIAFYS). Residues 316–350 (QNLFQKDIFSAVGWIPKAATMSALEELFRIARAQT) lie on the Extracellular side of the membrane. A helical membrane pass occupies residues 351–371 (LIALCGTVPGYWFTVALIDVV). The Cytoplasmic segment spans residues 372-375 (GRFK). Residues 376-396 (IQAVGFFMMTLFMLTLALPYH) traverse the membrane as a helical segment. At 397–405 (HWTAPGKNH) the chain is on the extracellular side. A helical membrane pass occupies residues 406 to 426 (VGFLLLYGLTFFFANFGPNST). Topologically, residues 427–445 (TFIVPAEIFPARLRATCHG) are cytoplasmic. Residues 446-466 (ISAASGKLGAIVGSFGFLYLA) form a helical membrane-spanning segment. Over 467–486 (QSPDRSKTEHGYPPGIGVRN) the chain is Extracellular. The helical transmembrane segment at 487–507 (SLFLLAACNLLGLLFTFLVPE) threads the bilayer. Topologically, residues 508 to 534 (SKGKSLEEMSGDAEAQEEAPPPLQTVL) are cytoplasmic. The interval 514 to 534 (EEMSGDAEAQEEAPPPLQTVL) is disordered.

The protein belongs to the major facilitator superfamily. Phosphate:H(+) symporter (TC 2.A.1.9) family. As to expression, highly expressed in leaves and at low levels in roots. Expressed in leaf xylem parenchyma cells.

The protein resides in the membrane. Functionally, high-affinity transporter for external inorganic phosphate (Pi). Probably involved in Pi uptake, translocation and internal transport throughout the plant. In Oryza sativa subsp. japonica (Rice), this protein is Inorganic phosphate transporter 1-6 (PHT1-6).